A 404-amino-acid chain; its full sequence is GTPase Obg (404 aa).

The 159-residue stretch at 1 to 159 folds into the Obg domain; sequence MKFIDEARIE…RALRLELKVL (159 aa). The tract at residues 22–43 is disordered; that stretch reads SFRREKFIPRGGPDGGDGGRGG. The span at 33-43 shows a compositional bias: gly residues; sequence GPDGGDGGRGG. The region spanning 160-334 is the OBG-type G domain; sequence ADVGLLGMPN…LVFAIQDFLD (175 aa). GTP contacts are provided by residues 166–173, 191–195, 213–216, 284–287, and 315–317; these read GMPNAGKS, FTTLA, DIPG, NKLD, and SAL. Positions 173 and 193 each coordinate Mg(2+). The interval 373–404 is disordered; that stretch reads LLAEGETGTGDDGRDGNENDPADEQDTNRPNH.

This sequence belongs to the TRAFAC class OBG-HflX-like GTPase superfamily. OBG GTPase family. As to quaternary structure, monomer. The cofactor is Mg(2+).

Its subcellular location is the cytoplasm. Functionally, an essential GTPase which binds GTP, GDP and possibly (p)ppGpp with moderate affinity, with high nucleotide exchange rates and a fairly low GTP hydrolysis rate. Plays a role in control of the cell cycle, stress response, ribosome biogenesis and in those bacteria that undergo differentiation, in morphogenesis control. This Aromatoleum aromaticum (strain DSM 19018 / LMG 30748 / EbN1) (Azoarcus sp. (strain EbN1)) protein is GTPase Obg.